A 104-amino-acid polypeptide reads, in one-letter code: UPF0235 protein RBE_0633 (104 aa).

Belongs to the UPF0235 family.

The protein is UPF0235 protein RBE_0633 of Rickettsia bellii (strain RML369-C).